The sequence spans 504 residues: Maturase K (504 aa).

Belongs to the intron maturase 2 family. MatK subfamily.

The protein localises to the plastid. It localises to the chloroplast. Its function is as follows. Usually encoded in the trnK tRNA gene intron. Probably assists in splicing its own and other chloroplast group II introns. The polypeptide is Maturase K (Ochroma pyramidale (Balsa)).